Reading from the N-terminus, the 359-residue chain is uncharacterized protein (359 aa).

The region spanning 163–275 is the PINc domain; it reads VVDTSCIIDG…SKVANLQKVQ (113 aa). Mg(2+)-binding residues include aspartate 165 and aspartate 244. Positions 289–350 constitute a TRAM domain; the sequence is IYLPGDSLEL…LQTSAGRMIF (62 aa).

It belongs to the ycf81 family. The protein in the central section; belongs to the PINc/VapC protein family. Requires Mg(2+) as cofactor.

In terms of biological role, an RNase. This is an uncharacterized protein from Synechocystis sp. (strain ATCC 27184 / PCC 6803 / Kazusa).